Consider the following 261-residue polypeptide: Shikimate dehydrogenase (NADP(+)) (261 aa).

Residues Ser13–Ser15 and Thr60 contribute to the shikimate site. The active-site Proton acceptor is Lys64. Residues Asn85 and Asp100 each coordinate shikimate. NADP(+) is bound by residues Gly121–Ala125 and Ile202. Tyr204 contributes to the shikimate binding site. Position 225 (Gly225) interacts with NADP(+).

It belongs to the shikimate dehydrogenase family. In terms of assembly, homodimer.

It catalyses the reaction shikimate + NADP(+) = 3-dehydroshikimate + NADPH + H(+). It participates in metabolic intermediate biosynthesis; chorismate biosynthesis; chorismate from D-erythrose 4-phosphate and phosphoenolpyruvate: step 4/7. Its function is as follows. Involved in the biosynthesis of the chorismate, which leads to the biosynthesis of aromatic amino acids. Catalyzes the reversible NADPH linked reduction of 3-dehydroshikimate (DHSA) to yield shikimate (SA). The protein is Shikimate dehydrogenase (NADP(+)) of Exiguobacterium sibiricum (strain DSM 17290 / CCUG 55495 / CIP 109462 / JCM 13490 / 255-15).